A 291-amino-acid chain; its full sequence is Acetyl-coenzyme A carboxylase carboxyl transferase subunit beta (291 aa).

The CoA carboxyltransferase N-terminal domain occupies 29 to 291; that stretch reads IMTKCPDCKK…TGGDLEWLEN (263 aa). Zn(2+) is bound by residues cysteine 33, cysteine 36, cysteine 52, and cysteine 55. The segment at 33–55 adopts a C4-type zinc-finger fold; the sequence is CPDCKKIMLTKELDKNLRVCMNC.

Belongs to the AccD/PCCB family. In terms of assembly, acetyl-CoA carboxylase is a heterohexamer composed of biotin carboxyl carrier protein (AccB), biotin carboxylase (AccC) and two subunits each of ACCase subunit alpha (AccA) and ACCase subunit beta (AccD). The cofactor is Zn(2+).

The protein localises to the cytoplasm. It catalyses the reaction N(6)-carboxybiotinyl-L-lysyl-[protein] + acetyl-CoA = N(6)-biotinyl-L-lysyl-[protein] + malonyl-CoA. Its pathway is lipid metabolism; malonyl-CoA biosynthesis; malonyl-CoA from acetyl-CoA: step 1/1. In terms of biological role, component of the acetyl coenzyme A carboxylase (ACC) complex. Biotin carboxylase (BC) catalyzes the carboxylation of biotin on its carrier protein (BCCP) and then the CO(2) group is transferred by the transcarboxylase to acetyl-CoA to form malonyl-CoA. In Bacillus licheniformis (strain ATCC 14580 / DSM 13 / JCM 2505 / CCUG 7422 / NBRC 12200 / NCIMB 9375 / NCTC 10341 / NRRL NRS-1264 / Gibson 46), this protein is Acetyl-coenzyme A carboxylase carboxyl transferase subunit beta.